Reading from the N-terminus, the 120-residue chain is Jacalin-related lectin 39 (120 aa).

The region spanning Ser6 to Asn120 is the Jacalin-type lectin domain.

The protein belongs to the jacalin lectin family.

In Arabidopsis thaliana (Mouse-ear cress), this protein is Jacalin-related lectin 39 (JAL39).